We begin with the raw amino-acid sequence, 376 residues long: Putative C-mannosyltransferase DPY19L2P2 (376 aa).

Asparagine 32 carries an N-linked (GlcNAc...) asparagine glycan. 6 helical membrane passes run 52–72 (ACFY…LFFI), 107–127 (LRES…TLIL), 154–174 (AQFI…VGYI), 182–202 (IIYM…GNSM), 233–253 (LNCW…LKFL), and 299–319 (LLIY…CFIF).

It belongs to the dpy-19 family. In terms of tissue distribution, fibroblast, lung, lymphoblast, spleen and testis.

The protein localises to the membrane. Functionally, probable C-mannosyltransferase that mediates C-mannosylation of tryptophan residues on target proteins. In Homo sapiens (Human), this protein is Putative C-mannosyltransferase DPY19L2P2 (DPY19L2P2).